The primary structure comprises 185 residues: Elongation factor P (185 aa).

It belongs to the elongation factor P family.

The protein resides in the cytoplasm. It functions in the pathway protein biosynthesis; polypeptide chain elongation. Its function is as follows. Involved in peptide bond synthesis. Stimulates efficient translation and peptide-bond synthesis on native or reconstituted 70S ribosomes in vitro. Probably functions indirectly by altering the affinity of the ribosome for aminoacyl-tRNA, thus increasing their reactivity as acceptors for peptidyl transferase. This Geobacillus kaustophilus (strain HTA426) protein is Elongation factor P.